Reading from the N-terminus, the 396-residue chain is RNA polymerase principal sigma factor HrdA (396 aa).

Positions 1–20 (MRGGQRRASRLRPPTYRRRP) are enriched in basic residues. Residues 1–96 (MRGGQRRASR…PTRTESGGPS (96 aa)) form a disordered region. Low complexity-rich tracts occupy residues 33–42 (QTQTLTQTDT) and 56–75 (LLAM…PGAP). Positions 187–200 (DLVQEGNLGLIRAV) match the Polymerase core binding motif. The H-T-H motif DNA-binding region spans 357-376 (LEEIGRLFGVTRERIRQIES).

This sequence belongs to the sigma-70 factor family. Interacts transiently with the RNA polymerase catalytic core. Interacts with RNA polymerase-binding protein RbpA.

Its function is as follows. Sigma factors are initiation factors that promote the attachment of RNA polymerase to specific initiation sites and are then released. In Streptomyces coelicolor (strain ATCC BAA-471 / A3(2) / M145), this protein is RNA polymerase principal sigma factor HrdA (hrdA).